A 631-amino-acid chain; its full sequence is tRNA uridine 5-carboxymethylaminomethyl modification enzyme MnmG (631 aa).

Residues G15–G20, I127, and S182 each bind FAD. NAD(+) is bound at residue G276–F290. Q373 is an FAD binding site.

This sequence belongs to the MnmG family. In terms of assembly, homodimer. Heterotetramer of two MnmE and two MnmG subunits. It depends on FAD as a cofactor.

The protein resides in the cytoplasm. Functionally, NAD-binding protein involved in the addition of a carboxymethylaminomethyl (cmnm) group at the wobble position (U34) of certain tRNAs, forming tRNA-cmnm(5)s(2)U34. In Streptococcus mutans serotype c (strain ATCC 700610 / UA159), this protein is tRNA uridine 5-carboxymethylaminomethyl modification enzyme MnmG.